A 444-amino-acid chain; its full sequence is U4/U6 snRNA-associated-splicing factor PRP24 (444 aa).

The segment covering 1–16 (MEYGHHARPDSKRPLD) has biased composition (basic and acidic residues). The segment at 1-29 (MEYGHHARPDSKRPLDEGSPAAAGLTSKK) is disordered. Serine 19 carries the phosphoserine modification. 3 RRM domains span residues 41–116 (TTVL…HLTE), 117–195 (CTLW…VSNP), and 210–289 (REIM…LADK).

Monomer. Interacts with U6 snRNA SNR6 and the LSM2-8 complex (small nuclear RNA); to chaperone formation of the U4/U6-U5 tri-snRNP (small nuclear ribonucleoprotein) assembly, the protein is displaced from the U4/U6 snRNP once pairing is complete.

Its subcellular location is the nucleus. Functionally, functions as a recycling factor of the spliceosome, a machinery that forms on each precursor-messenger RNA (pre-mRNA) and catalyzes the removal of introns. Chaperones the re-annealing of U4 and U6 snRNAs (small nuclear RNAs) released from previous rounds of splicing, an initial step in reforming the U4/U6-U5 tri-snRNP (small nuclear ribonucleoprotein) that can reassemble into another spliceosome complex; this step involves binding U6 and facilitating the unwinding of the U6 internal stem loop, followed by base-pairing of U6 to U4. In Saccharomyces cerevisiae (strain ATCC 204508 / S288c) (Baker's yeast), this protein is U4/U6 snRNA-associated-splicing factor PRP24 (PRP24).